A 424-amino-acid chain; its full sequence is MSRDKSERDNLQDTTTINLRRRRRVKEGKAASKPPQVYPLMKCKLRYLKLKKLAHLLSLEDNILSLCEPDKSSEGSNSQKHVVEQLRGSPLSVGTLEEFVDDHHGIITTGVGLEYYVNIMSFVDKDLLEPGCTVLLNYKDNSVVGVLEGEMDPMVNVMKLEKAPSETYADIGGLEEQIQEIKESVELPLTNPELYQEMGIKPPKGVILYGLPGTGKTLLAKAVANQTSATFLRVVGTELIQEYLGEGPKLVRELFRVADMHAPSIIFIDEIDAIGGKRYNTSSGGRREVQRTMLELLNQLDGFDTRNDIKVIMATNKIEALDPALIRPGRIDRKIEFGMPDAATKKKIFDIHTSRMTLDESVNIELLITSKEDLSGADIKAICTEAGMIALRERRKTVTMKDFISAREKVFFSKQKMVSAGLYS.

A compositionally biased stretch (basic and acidic residues) spans 1 to 11; it reads MSRDKSERDNL. A disordered region spans residues 1-33; that stretch reads MSRDKSERDNLQDTTTINLRRRRRVKEGKAASK. 210 to 217 contacts ATP; the sequence is GLPGTGKT.

The protein belongs to the AAA ATPase family. As to quaternary structure, the 26S proteasome consists of a 20S proteasome core and two 19S regulatory subunits. The 20S proteasome core is composed of 28 subunits that are arranged in four stacked rings, resulting in a barrel-shaped structure. The two end rings are each formed by seven alpha subunits, and the two central rings are each formed by seven beta subunits. The catalytic chamber with the active sites is on the inside of the barrel.

It is found in the cytoplasm. The protein localises to the nucleus. In terms of biological role, acts as a regulatory subunit of the 26S proteasome which degrades poly-ubiquitinated proteins in the cytoplasm and in the nucleus. It is essential for the regulated turnover of proteins and for the removal of misfolded proteins. The proteasome is a multicatalytic proteinase complex that is characterized by its ability to cleave peptides with Arg, Phe, Tyr, Leu, and Glu adjacent to the leaving group at neutral or slightly basic pH. The polypeptide is 26S proteasome regulatory subunit 4 homolog (RPT2) (Encephalitozoon cuniculi (strain GB-M1) (Microsporidian parasite)).